The following is a 298-amino-acid chain: Tyrosine recombinase XerD (298 aa).

The Core-binding (CB) domain maps to 3-88 (ALDHPLIDQF…GLRGFFRYLL (86 aa)). Residues 109–292 (PLPKSLSEAD…AKARLQQLHA (184 aa)) enclose the Tyr recombinase domain. Active-site residues include Arg-149, Lys-173, His-244, Arg-247, and His-270. The active-site O-(3'-phospho-DNA)-tyrosine intermediate is the Tyr-279.

This sequence belongs to the 'phage' integrase family. XerD subfamily. In terms of assembly, forms a cyclic heterotetrameric complex composed of two molecules of XerC and two molecules of XerD.

Its subcellular location is the cytoplasm. Site-specific tyrosine recombinase, which acts by catalyzing the cutting and rejoining of the recombining DNA molecules. The XerC-XerD complex is essential to convert dimers of the bacterial chromosome into monomers to permit their segregation at cell division. It also contributes to the segregational stability of plasmids. The protein is Tyrosine recombinase XerD of Pseudomonas putida (strain ATCC 47054 / DSM 6125 / CFBP 8728 / NCIMB 11950 / KT2440).